The chain runs to 164 residues: Lipoprotein signal peptidase (164 aa).

Transmembrane regions (helical) follow at residues 12 to 32 (WLWL…LILQ), 70 to 90 (WFFA…MYRS), and 102 to 122 (ALII…GFVV). Catalysis depends on residues aspartate 123 and aspartate 141. A helical membrane pass occupies residues 137-157 (FNLADTAICVGAALIVLEGFL).

This sequence belongs to the peptidase A8 family.

The protein resides in the cell inner membrane. The enzyme catalyses Release of signal peptides from bacterial membrane prolipoproteins. Hydrolyzes -Xaa-Yaa-Zaa-|-(S,diacylglyceryl)Cys-, in which Xaa is hydrophobic (preferably Leu), and Yaa (Ala or Ser) and Zaa (Gly or Ala) have small, neutral side chains.. It participates in protein modification; lipoprotein biosynthesis (signal peptide cleavage). This protein specifically catalyzes the removal of signal peptides from prolipoproteins. This chain is Lipoprotein signal peptidase, found in Shigella flexneri.